Consider the following 307-residue polypeptide: Small ribosomal subunit biogenesis GTPase RsgA (307 aa).

The segment at 1-20 (MPSEHPFSDGISTPNPKETM) is disordered. Polar residues predominate over residues 10-20 (GISTPNPKETM). Residues 85–242 (RQDAWKTKLI…LIDSPGLQEF (158 aa)) enclose the CP-type G domain. Residues 135 to 138 (NKAD) and 184 to 192 (GQSGMGKST) contribute to the GTP site. Zn(2+) contacts are provided by cysteine 266, cysteine 271, histidine 273, and cysteine 279.

It belongs to the TRAFAC class YlqF/YawG GTPase family. RsgA subfamily. Monomer. Associates with 30S ribosomal subunit, binds 16S rRNA. Zn(2+) serves as cofactor.

The protein resides in the cytoplasm. Functionally, one of several proteins that assist in the late maturation steps of the functional core of the 30S ribosomal subunit. Helps release RbfA from mature subunits. May play a role in the assembly of ribosomal proteins into the subunit. Circularly permuted GTPase that catalyzes slow GTP hydrolysis, GTPase activity is stimulated by the 30S ribosomal subunit. The protein is Small ribosomal subunit biogenesis GTPase RsgA of Neisseria meningitidis serogroup C / serotype 2a (strain ATCC 700532 / DSM 15464 / FAM18).